Here is a 146-residue protein sequence, read N- to C-terminus: Large ribosomal subunit protein uL15 (146 aa).

Residues 1–57 (MKLHELKPAQGSRKTRNRVGRGSSSGNGKTAGRGQKGQKARSGGNIRSGFEGGQTPL) are disordered. Over residues 23 to 35 (SSSGNGKTAGRGQ) the composition is skewed to gly residues.

The protein belongs to the universal ribosomal protein uL15 family. In terms of assembly, part of the 50S ribosomal subunit.

Binds to the 23S rRNA. This is Large ribosomal subunit protein uL15 from Streptococcus mutans serotype c (strain ATCC 700610 / UA159).